The chain runs to 628 residues: ATP-binding cassette sub-family F member 2 (628 aa).

Positions 1 to 57 (MPSDLAKKKAAKKKEAAKARQRPRKGHEENGDAVTEPQVAEEKIEEANGRETTGDGE) are disordered. Over residues 40 to 53 (AEEKIEEANGRETT) the composition is skewed to basic and acidic residues. ABC transporter domains are found at residues 91–330 (VHII…ENQM) and 401–618 (IMVQ…VDEE). 123-130 (GLNGIGKS) serves as a coordination point for ATP. Position 223 is a phosphothreonine (T223). Position 309 is an N6-acetyllysine (K309). 435–442 (GPNGAGKS) lines the ATP pocket. S517 carries the phosphoserine modification.

Belongs to the ABC transporter superfamily. ABCF family. EF3 subfamily.

The polypeptide is ATP-binding cassette sub-family F member 2 (Mus musculus (Mouse)).